Here is a 236-residue protein sequence, read N- to C-terminus: Ubiquinone biosynthesis O-methyltransferase (236 aa).

Arginine 36, glycine 56, aspartate 77, and methionine 125 together coordinate S-adenosyl-L-methionine.

This sequence belongs to the methyltransferase superfamily. UbiG/COQ3 family.

It catalyses the reaction a 3-demethylubiquinol + S-adenosyl-L-methionine = a ubiquinol + S-adenosyl-L-homocysteine + H(+). The catalysed reaction is a 3-(all-trans-polyprenyl)benzene-1,2-diol + S-adenosyl-L-methionine = a 2-methoxy-6-(all-trans-polyprenyl)phenol + S-adenosyl-L-homocysteine + H(+). It participates in cofactor biosynthesis; ubiquinone biosynthesis. Functionally, O-methyltransferase that catalyzes the 2 O-methylation steps in the ubiquinone biosynthetic pathway. The sequence is that of Ubiquinone biosynthesis O-methyltransferase from Haemophilus ducreyi (strain 35000HP / ATCC 700724).